Consider the following 204-residue polypeptide: Cytochrome c biogenesis ATP-binding export protein CcmA (204 aa).

The ABC transporter domain occupies 3–204; it reads LSGHGLRCVR…ARELRIGGTT (202 aa). 35-42 serves as a coordination point for ATP; sequence GPNGAGKT.

The protein belongs to the ABC transporter superfamily. CcmA exporter (TC 3.A.1.107) family. The complex is composed of two ATP-binding proteins (CcmA) and two transmembrane proteins (CcmB).

Its subcellular location is the cell inner membrane. The enzyme catalyses heme b(in) + ATP + H2O = heme b(out) + ADP + phosphate + H(+). Part of the ABC transporter complex CcmAB involved in the biogenesis of c-type cytochromes; once thought to export heme, this seems not to be the case, but its exact role is uncertain. Responsible for energy coupling to the transport system. The chain is Cytochrome c biogenesis ATP-binding export protein CcmA from Nitrobacter hamburgensis (strain DSM 10229 / NCIMB 13809 / X14).